Reading from the N-terminus, the 349-residue chain is Anaerobic nitrite reductase Glb1-3 (349 aa).

Globin domains are found at residues 13-162 (GFTE…AEMK) and 184-333 (CFTE…AEMK). The heme b site is built by S56, K70, H74, K104, T108, H109, S227, K241, H245, K275, T279, and H280.

The protein belongs to the plant globin family. In terms of assembly, monomer. It depends on heme b as a cofactor.

It localises to the cytoplasm. The protein resides in the nucleus. The catalysed reaction is Fe(III)-heme b-[protein] + nitric oxide + H2O = Fe(II)-heme b-[protein] + nitrite + 2 H(+). Its function is as follows. Phytoglobin that regulates the fine tuning of nitric oxide (NO) concentration in the cytosol in response to sudden changes in O(2) availability, and performs both symbiotic and nonsymbiotic functions. Exhibits NO dioxygenase activity in the presence of O(2) but nitrite reductase (NiR) activity in the absence of O(2) (e.g. during flooding or in waterlogged soil). May not function as an oxygen storage or transport protein. Extremely reactive toward the physiological ligands O(2), nitric oxide (NO), and nitrite with a very high affinity for O(2) through an hexacoordinate heme iron because of a very low dissociation constant. This chain is Anaerobic nitrite reductase Glb1-3, found in Medicago truncatula (Barrel medic).